We begin with the raw amino-acid sequence, 414 residues long: Arginine deiminase (414 aa).

The active-site Amidino-cysteine intermediate is the Cys402.

Belongs to the arginine deiminase family.

The protein resides in the cytoplasm. The enzyme catalyses L-arginine + H2O = L-citrulline + NH4(+). It functions in the pathway amino-acid degradation; L-arginine degradation via ADI pathway; carbamoyl phosphate from L-arginine: step 1/2. This Oenococcus oeni (strain ATCC BAA-331 / PSU-1) protein is Arginine deiminase.